The primary structure comprises 97 residues: YcgL domain-containing protein Pfl01_1389 (97 aa).

The YcgL domain maps to 3 to 87 (RICSIYQSSK…AEEEYIEHLP (85 aa)).

This chain is YcgL domain-containing protein Pfl01_1389, found in Pseudomonas fluorescens (strain Pf0-1).